The sequence spans 192 residues: Glutaredoxin-C9 (192 aa).

The region spanning 89-191 is the Glutaredoxin domain; the sequence is YERVARMASG…PLLKQAGALW (103 aa). Cysteines 109 and 112 form a disulfide. The Responsive for interaction with TGA factors signature appears at 189 to 192; that stretch reads ALWL.

The protein belongs to the glutaredoxin family. CC-type subfamily.

The protein resides in the cytoplasm. Its subcellular location is the nucleus. Functionally, has a glutathione-disulfide oxidoreductase activity in the presence of NADPH and glutathione reductase. Reduces low molecular weight disulfides and proteins. The polypeptide is Glutaredoxin-C9 (GRXC9) (Oryza sativa subsp. japonica (Rice)).